Consider the following 197-residue polypeptide: Ras-like protein rasB (197 aa).

13–20 (GGGGVGKS) lines the GTP pocket. The Effector region motif lies at 35–43 (YDPTIEDSY). GTP-binding positions include 60–64 (DTAGQ) and 119–122 (NKCD). Cysteine 194 carries the post-translational modification Cysteine methyl ester. A lipid anchor (S-geranylgeranyl cysteine) is attached at cysteine 194. The propeptide at 195–197 (LIL) is removed in mature form.

This sequence belongs to the small GTPase superfamily. Ras family.

The protein localises to the cell membrane. It carries out the reaction GTP + H2O = GDP + phosphate + H(+). Its activity is regulated as follows. Alternates between an inactive form bound to GDP and an active form bound to GTP. Activated by a guanine nucleotide-exchange factor (GEF) and inactivated by a GTPase-activating protein (GAP). Its function is as follows. Ras proteins bind GDP/GTP and possess intrinsic GTPase activity. The polypeptide is Ras-like protein rasB (rasB) (Dictyostelium discoideum (Social amoeba)).